We begin with the raw amino-acid sequence, 108 residues long: Protein YcgL (108 aa).

Residues 12–96 (MFCVIYRSSK…PPEDLLKQHL (85 aa)) enclose the YcgL domain.

The protein is Protein YcgL of Shigella sonnei (strain Ss046).